Reading from the N-terminus, the 701-residue chain is Polyribonucleotide nucleotidyltransferase (701 aa).

Residues Asp-485 and Asp-491 each coordinate Mg(2+). One can recognise a KH domain in the interval 552 to 611; the sequence is PRITTLKINPEKIRDVIGKGGATIRALTEETGTTIELEDDGTVKIASSNGEATKEAIRRI. Positions 621 to 689 constitute an S1 motif domain; the sequence is GTVYNGKVVR…RQGRVRLSMK (69 aa).

This sequence belongs to the polyribonucleotide nucleotidyltransferase family. Component of the RNA degradosome, which is a multiprotein complex involved in RNA processing and mRNA degradation. Mg(2+) serves as cofactor.

It is found in the cytoplasm. It carries out the reaction RNA(n+1) + phosphate = RNA(n) + a ribonucleoside 5'-diphosphate. Involved in mRNA degradation. Catalyzes the phosphorolysis of single-stranded polyribonucleotides processively in the 3'- to 5'-direction. This Shewanella piezotolerans (strain WP3 / JCM 13877) protein is Polyribonucleotide nucleotidyltransferase.